Reading from the N-terminus, the 413-residue chain is Putative syntaxin-5 (413 aa).

At 1–391 the chain is on the cytoplasmic side; the sequence is MSDFHNIRSR…RYLQNISKNR (391 aa). The interval 257 to 290 is disordered; it reads KNRRDKFSSGAAVPMGLPSSSSGANVRSKLLQDD. Positions 321–383 constitute a t-SNARE coiled-coil homology domain; it reads LEYAQARSNT…DMAHSELVRY (63 aa). Residues 392–412 traverse the membrane as a helical; Anchor for type IV membrane protein segment; the sequence is WLMIQVFGVLMVFFVVFVLFL. A topological domain (extracellular) is located at residue Thr413.

It belongs to the syntaxin family.

The protein resides in the membrane. Potentially involved in docking of synaptic vesicles at presynaptic active zones. The polypeptide is Putative syntaxin-5 (syx-5) (Caenorhabditis elegans).